A 418-amino-acid polypeptide reads, in one-letter code: Actin-related protein 3 (418 aa).

The protein belongs to the actin family. ARP3 subfamily. As to quaternary structure, component of the Arp2/3 complex.

Its subcellular location is the cytoplasm. It is found in the cytoskeleton. Functions as ATP-binding component of the Arp2/3 complex which is involved in regulation of actin polymerization and together with an activating nucleation-promoting factor (NPF) mediates the formation of branched actin networks. Seems to contact the pointed end of the daughter actin filament. Required during embryogenesis for the developmental migration of tail hemocytes anteriorly, along the ventral midline. The protein is Actin-related protein 3 of Drosophila melanogaster (Fruit fly).